Reading from the N-terminus, the 208-residue chain is ATP phosphoribosyltransferase (208 aa).

The protein belongs to the ATP phosphoribosyltransferase family. Short subfamily. In terms of assembly, heteromultimer composed of HisG and HisZ subunits.

The protein resides in the cytoplasm. The catalysed reaction is 1-(5-phospho-beta-D-ribosyl)-ATP + diphosphate = 5-phospho-alpha-D-ribose 1-diphosphate + ATP. Its pathway is amino-acid biosynthesis; L-histidine biosynthesis; L-histidine from 5-phospho-alpha-D-ribose 1-diphosphate: step 1/9. Catalyzes the condensation of ATP and 5-phosphoribose 1-diphosphate to form N'-(5'-phosphoribosyl)-ATP (PR-ATP). Has a crucial role in the pathway because the rate of histidine biosynthesis seems to be controlled primarily by regulation of HisG enzymatic activity. The protein is ATP phosphoribosyltransferase of Thermotoga petrophila (strain ATCC BAA-488 / DSM 13995 / JCM 10881 / RKU-1).